Consider the following 284-residue polypeptide: D-tagatose-1,6-bisphosphate aldolase subunit GatY (284 aa).

The active-site Proton donor is the Asp82. Residues His83 and His180 each contribute to the Zn(2+) site. Cys181 is a dihydroxyacetone phosphate binding site. His208 provides a ligand contact to Zn(2+). Dihydroxyacetone phosphate is bound by residues 209-211 and 230-233; these read GAS and NVAT.

The protein belongs to the class II fructose-bisphosphate aldolase family. TagBP aldolase GatY subfamily. As to quaternary structure, forms a complex with GatZ. Zn(2+) serves as cofactor.

It carries out the reaction D-tagatofuranose 1,6-bisphosphate = D-glyceraldehyde 3-phosphate + dihydroxyacetone phosphate. It functions in the pathway carbohydrate metabolism; D-tagatose 6-phosphate degradation; D-glyceraldehyde 3-phosphate and glycerone phosphate from D-tagatose 6-phosphate: step 2/2. In terms of biological role, catalytic subunit of the tagatose-1,6-bisphosphate aldolase GatYZ, which catalyzes the reversible aldol condensation of dihydroxyacetone phosphate (DHAP or glycerone-phosphate) with glyceraldehyde 3-phosphate (G3P) to produce tagatose 1,6-bisphosphate (TBP). Requires GatZ subunit for full activity and stability. Is involved in the catabolism of galactitol. The protein is D-tagatose-1,6-bisphosphate aldolase subunit GatY of Salmonella paratyphi A (strain ATCC 9150 / SARB42).